The primary structure comprises 380 residues: GTP-binding protein 10 (380 aa).

Positions 13–148 constitute an Obg domain; the sequence is GNFVDNVRLY…RNIRLDLKLI (136 aa). An OBG-type G domain is found at 149–344; sequence ADFGLVGFPN…LKSLIRQSLE (196 aa). GTP is bound by residues 155–162, 202–206, and 278–281; these read GFPNAGKS, DLPGL, and NKMD.

It belongs to the TRAFAC class OBG-HflX-like GTPase superfamily. OBG GTPase family.

It localises to the nucleus. It is found in the nucleolus. Functionally, may be involved in the ribosome maturation process. This is GTP-binding protein 10 (gtpbp10) from Danio rerio (Zebrafish).